We begin with the raw amino-acid sequence, 456 residues long: tRNA modification GTPase MnmE (456 aa).

(6S)-5-formyl-5,6,7,8-tetrahydrofolate contacts are provided by arginine 25, glutamate 82, and lysine 121. One can recognise a TrmE-type G domain in the interval glycine 217 to glycine 379. Residue asparagine 227 coordinates K(+). GTP contacts are provided by residues asparagine 227–serine 232, threonine 246–threonine 252, and aspartate 271–glycine 274. Residue serine 231 coordinates Mg(2+). The K(+) site is built by threonine 246, isoleucine 248, and threonine 251. Threonine 252 contributes to the Mg(2+) binding site. Position 456 (lysine 456) interacts with (6S)-5-formyl-5,6,7,8-tetrahydrofolate.

This sequence belongs to the TRAFAC class TrmE-Era-EngA-EngB-Septin-like GTPase superfamily. TrmE GTPase family. As to quaternary structure, homodimer. Heterotetramer of two MnmE and two MnmG subunits. The cofactor is K(+).

The protein localises to the cytoplasm. Functionally, exhibits a very high intrinsic GTPase hydrolysis rate. Involved in the addition of a carboxymethylaminomethyl (cmnm) group at the wobble position (U34) of certain tRNAs, forming tRNA-cmnm(5)s(2)U34. The polypeptide is tRNA modification GTPase MnmE (Endomicrobium trichonymphae).